We begin with the raw amino-acid sequence, 364 residues long: Glycine oxidase (364 aa).

FAD-binding positions include 12 to 13 (VI), 32 to 33 (ER), 40 to 41 (AS), 45 to 47 (GGI), and V173. A substrate-binding site is contributed by R302. 327–333 (HYRNGLV) is an FAD binding site.

Belongs to the DAO family. ThiO subfamily. In terms of assembly, monomer. It depends on FAD as a cofactor.

It catalyses the reaction glycine + O2 + H2O = glyoxylate + H2O2 + NH4(+). The catalysed reaction is sarcosine + O2 + H2O = methylamine + glyoxylate + H2O2. Its pathway is cofactor biosynthesis; thiamine diphosphate biosynthesis. Functionally, catalyzes the oxidation of glycine, leading to glyoxyl imine and hydrogen peroxide as primary products; glyoxyl imine is used for the biosynthesis of the thiazole ring of thiamine. Otherwise, glyoxyl imine is spontaneously hydrolyzed in water to produce glyoxylate and ammonia. Can also use sarcosine (N-methylglycine) as substrate. This chain is Glycine oxidase, found in Pseudomonas aeruginosa (strain ATCC 15692 / DSM 22644 / CIP 104116 / JCM 14847 / LMG 12228 / 1C / PRS 101 / PAO1).